Reading from the N-terminus, the 218-residue chain is 3,4-dihydroxy-2-butanone 4-phosphate synthase (218 aa).

D-ribulose 5-phosphate is bound by residues 37–38 (RE), Asp42, 150–154 (RSGHT), and Glu174. Position 38 (Glu38) interacts with Mg(2+). His153 is a Mg(2+) binding site.

It belongs to the DHBP synthase family. In terms of assembly, homodimer. Mg(2+) is required as a cofactor. The cofactor is Mn(2+).

It carries out the reaction D-ribulose 5-phosphate = (2S)-2-hydroxy-3-oxobutyl phosphate + formate + H(+). It participates in cofactor biosynthesis; riboflavin biosynthesis; 2-hydroxy-3-oxobutyl phosphate from D-ribulose 5-phosphate: step 1/1. Catalyzes the conversion of D-ribulose 5-phosphate to formate and 3,4-dihydroxy-2-butanone 4-phosphate. The polypeptide is 3,4-dihydroxy-2-butanone 4-phosphate synthase (Hamiltonella defensa subsp. Acyrthosiphon pisum (strain 5AT)).